Consider the following 205-residue polypeptide: Probable GTP-binding protein EngB (205 aa).

Positions 22-194 (ELPEIAFAGR…WESILDLCEI (173 aa)) constitute an EngB-type G domain. GTP is bound by residues 30 to 37 (GRSNVGKS), 57 to 61 (GRTQL), 75 to 78 (DLPG), 142 to 145 (TKAD), and 173 to 175 (FSA). Residues serine 37 and threonine 59 each contribute to the Mg(2+) site.

It belongs to the TRAFAC class TrmE-Era-EngA-EngB-Septin-like GTPase superfamily. EngB GTPase family. The cofactor is Mg(2+).

Necessary for normal cell division and for the maintenance of normal septation. The protein is Probable GTP-binding protein EngB of Desulfatibacillum aliphaticivorans.